The sequence spans 608 residues: Threonine--tRNA ligase (608 aa).

The tract at residues 1 to 143 (MRVLYIHAER…VFKPEEAKTE (143 aa)) is editing domain. Catalytic stretches follow at residues 194 to 490 (PKYL…PRLP) and 195 to 490 (KYLD…PRLP). Residues Cys287, His338, and His459 each contribute to the Zn(2+) site.

It belongs to the class-II aminoacyl-tRNA synthetase family. As to quaternary structure, homodimer. It depends on Zn(2+) as a cofactor.

The protein localises to the cytoplasm. The enzyme catalyses tRNA(Thr) + L-threonine + ATP = L-threonyl-tRNA(Thr) + AMP + diphosphate + H(+). Its function is as follows. Catalyzes the attachment of threonine to tRNA(Thr) in a two-step reaction: L-threonine is first activated by ATP to form Thr-AMP and then transferred to the acceptor end of tRNA(Thr). Also edits incorrectly charged L-seryl-tRNA(Thr). The protein is Threonine--tRNA ligase of Pyrobaculum arsenaticum (strain DSM 13514 / JCM 11321 / PZ6).